The primary structure comprises 437 residues: tRNA(Ile2) 2-agmatinylcytidine synthetase TiaS (437 aa).

This sequence belongs to the TiaS family.

It is found in the cytoplasm. It carries out the reaction cytidine(34) in tRNA(Ile2) + agmatine + ATP + H2O = 2-agmatinylcytidine(34) in tRNA(Ile2) + AMP + 2 phosphate + 2 H(+). Functionally, ATP-dependent agmatine transferase that catalyzes the formation of 2-agmatinylcytidine (agm2C) at the wobble position (C34) of tRNA(Ile2), converting the codon specificity from AUG to AUA. The sequence is that of tRNA(Ile2) 2-agmatinylcytidine synthetase TiaS from Acidilobus saccharovorans (strain DSM 16705 / JCM 18335 / VKM B-2471 / 345-15).